A 111-amino-acid polypeptide reads, in one-letter code: Large ribosomal subunit protein uL22 (111 aa).

The protein belongs to the universal ribosomal protein uL22 family. As to quaternary structure, part of the 50S ribosomal subunit.

Functionally, this protein binds specifically to 23S rRNA; its binding is stimulated by other ribosomal proteins, e.g. L4, L17, and L20. It is important during the early stages of 50S assembly. It makes multiple contacts with different domains of the 23S rRNA in the assembled 50S subunit and ribosome. In terms of biological role, the globular domain of the protein is located near the polypeptide exit tunnel on the outside of the subunit, while an extended beta-hairpin is found that lines the wall of the exit tunnel in the center of the 70S ribosome. In Wigglesworthia glossinidia brevipalpis, this protein is Large ribosomal subunit protein uL22.